A 958-amino-acid chain; its full sequence is UPF0182 protein TW644 (958 aa).

7 helical membrane passes run 14 to 34 (IAIL…FFLV), 59 to 79 (IFVV…LCMF), 107 to 127 (KIVV…FAAS), 166 to 186 (LFFL…ISVV), 205 to 225 (VQYA…FWLN), 249 to 269 (LIPG…LFCI), and 280 to 300 (IIGV…LPWG).

The protein belongs to the UPF0182 family.

The protein localises to the cell membrane. The protein is UPF0182 protein TW644 of Tropheryma whipplei (strain TW08/27) (Whipple's bacillus).